The sequence spans 209 residues: Ribonuclease HII (209 aa).

The 198-residue stretch at 5-202 (SMTLGIDEAG…KNRILNPKLL (198 aa)) folds into the RNase H type-2 domain. Positions 11, 12, and 108 each coordinate a divalent metal cation.

It belongs to the RNase HII family. Mn(2+) serves as cofactor. It depends on Mg(2+) as a cofactor.

The protein resides in the cytoplasm. It carries out the reaction Endonucleolytic cleavage to 5'-phosphomonoester.. In terms of biological role, endonuclease that specifically degrades the RNA of RNA-DNA hybrids. This Helicobacter pylori (strain J99 / ATCC 700824) (Campylobacter pylori J99) protein is Ribonuclease HII (rnhB).